The following is a 978-amino-acid chain: Receptor like protein 21 (978 aa).

Positions 1-27 (MLLAMEGKLFLCQYLIWVMLLLGQLHG) are cleaved as a signal peptide. Over 28–930 (CTSCIEKERE…EEDDKAAIDM (903 aa)) the chain is Extracellular. Residues N64, N79, N102, N116, and N155 are each glycosylated (N-linked (GlcNAc...) asparagine). 28 LRR repeats span residues 141 to 167 (LRNL…AATS), 169 to 189 (TTLI…GLKD), 190 to 213 (LTNL…LIHL), 214 to 237 (KKLK…ELQN), 238 to 262 (LINL…VFCK), 264 to 287 (KNLR…LGSL), 288 to 310 (KKLR…SFSS), 312 to 335 (ESLE…PLTN), 337 to 361 (TNLK…TWQP), 362 to 385 (NFQL…LLYQ), 386 to 409 (KKLR…LLTN), 410 to 432 (NPEL…PTMV), 433 to 455 (HNLQ…MDHA), 457 to 480 (PNLV…IGEM), 481 to 504 (KNIS…FVTG), 506 to 529 (VSIM…ETNF), 530 to 553 (PSLD…LSNS), 554 to 577 (TMLR…LFEF), 579 to 601 (YLDY…LLGM), 602 to 625 (PFLS…VDSE), 627 to 646 (GIYM…DTLL), 647 to 671 (KSVQ…DTQS), 673 to 693 (NILL…LCDL), 694 to 716 (SNVR…CLSN), 788 to 811 (LRLM…ELGD), 812 to 835 (LLKL…SFSK), 837 to 859 (IDVE…LLSS), and 860 to 885 (LTSL…QFNT). N204 is a glycosylation site (N-linked (GlcNAc...) asparagine). An N-linked (GlcNAc...) asparagine glycan is attached at N335. N-linked (GlcNAc...) asparagine glycans are attached at residues N397 and N420. 3 N-linked (GlcNAc...) asparagine glycosylation sites follow: N463, N482, and N492. A glycan (N-linked (GlcNAc...) asparagine) is linked at N552. N636 carries an N-linked (GlcNAc...) asparagine glycan. N-linked (GlcNAc...) asparagine glycosylation is found at N681 and N716. N-linked (GlcNAc...) asparagine glycosylation occurs at N819. The N-linked (GlcNAc...) asparagine glycan is linked to N872. The disordered stretch occupies residues 902–922 (TSRSCETNKSPEEADNGQEEE). The helical transmembrane segment at 931–951 (MVFYFSTASIYVTALIGVLVL) threads the bilayer. The Cytoplasmic segment spans residues 952–978 (MCFDCPWRRAWLRIVDAFIASAKHVLP).

It belongs to the RLP family.

It is found in the cell membrane. This chain is Receptor like protein 21, found in Arabidopsis thaliana (Mouse-ear cress).